The sequence spans 99 residues: uncharacterized protein (99 aa).

Residues 3-68 adopt a coiled-coil conformation; that stretch reads ERLKAITNLL…EKFDSNRKFY (66 aa).

This is an uncharacterized protein from Aquifex aeolicus (strain VF5).